Reading from the N-terminus, the 481-residue chain is ATP synthase subunit beta, chloroplastic (481 aa).

ATP is bound at residue 162 to 169 (GGAGVGKT).

It belongs to the ATPase alpha/beta chains family. As to quaternary structure, F-type ATPases have 2 components, CF(1) - the catalytic core - and CF(0) - the membrane proton channel. CF(1) has five subunits: alpha(3), beta(3), gamma(1), delta(1), epsilon(1). CF(0) has four main subunits: a(1), b(1), b'(1) and c(9-12).

The protein resides in the plastid. The protein localises to the chloroplast thylakoid membrane. It catalyses the reaction ATP + H2O + 4 H(+)(in) = ADP + phosphate + 5 H(+)(out). In terms of biological role, produces ATP from ADP in the presence of a proton gradient across the membrane. The catalytic sites are hosted primarily by the beta subunits. The polypeptide is ATP synthase subunit beta, chloroplastic (Oltmannsiellopsis viridis (Marine flagellate)).